A 294-amino-acid chain; its full sequence is Probable endonuclease 4 (294 aa).

Zn(2+) is bound by residues H78, H118, E157, D191, H194, H228, D241, H243, and E273.

This sequence belongs to the AP endonuclease 2 family. The cofactor is Zn(2+).

It carries out the reaction Endonucleolytic cleavage to 5'-phosphooligonucleotide end-products.. In terms of biological role, endonuclease IV plays a role in DNA repair. It cleaves phosphodiester bonds at apurinic or apyrimidinic (AP) sites, generating a 3'-hydroxyl group and a 5'-terminal sugar phosphate. The chain is Probable endonuclease 4 from Streptomyces coelicolor (strain ATCC BAA-471 / A3(2) / M145).